We begin with the raw amino-acid sequence, 511 residues long: Bifunctional purine biosynthesis protein PurH (511 aa).

In terms of domain architecture, MGS-like spans 1 to 145; sequence MKKRALVSVS…KNHKFVSVIV (145 aa).

The protein belongs to the PurH family.

It carries out the reaction (6R)-10-formyltetrahydrofolate + 5-amino-1-(5-phospho-beta-D-ribosyl)imidazole-4-carboxamide = 5-formamido-1-(5-phospho-D-ribosyl)imidazole-4-carboxamide + (6S)-5,6,7,8-tetrahydrofolate. The enzyme catalyses IMP + H2O = 5-formamido-1-(5-phospho-D-ribosyl)imidazole-4-carboxamide. It functions in the pathway purine metabolism; IMP biosynthesis via de novo pathway; 5-formamido-1-(5-phospho-D-ribosyl)imidazole-4-carboxamide from 5-amino-1-(5-phospho-D-ribosyl)imidazole-4-carboxamide (10-formyl THF route): step 1/1. It participates in purine metabolism; IMP biosynthesis via de novo pathway; IMP from 5-formamido-1-(5-phospho-D-ribosyl)imidazole-4-carboxamide: step 1/1. The chain is Bifunctional purine biosynthesis protein PurH from Bacillus mycoides (strain KBAB4) (Bacillus weihenstephanensis).